The chain runs to 209 residues: Ribosomal RNA large subunit methyltransferase E (209 aa).

Glycine 63, tryptophan 65, aspartate 83, aspartate 99, and aspartate 124 together coordinate S-adenosyl-L-methionine. The active-site Proton acceptor is the lysine 164.

The protein belongs to the class I-like SAM-binding methyltransferase superfamily. RNA methyltransferase RlmE family.

The protein localises to the cytoplasm. It carries out the reaction uridine(2552) in 23S rRNA + S-adenosyl-L-methionine = 2'-O-methyluridine(2552) in 23S rRNA + S-adenosyl-L-homocysteine + H(+). In terms of biological role, specifically methylates the uridine in position 2552 of 23S rRNA at the 2'-O position of the ribose in the fully assembled 50S ribosomal subunit. The protein is Ribosomal RNA large subunit methyltransferase E of Shewanella putrefaciens (strain CN-32 / ATCC BAA-453).